We begin with the raw amino-acid sequence, 1281 residues long: Zinc finger transcription factor Trps1 (1281 aa).

Disordered regions lie at residues 1–101 and 116–204; these read MVRK…VSFP and PAAG…KGDL. 2 stretches are compositionally biased toward polar residues: residues 21 to 31 and 40 to 49; these read LEPTATESKVS and DQMSENTDQS. Residue lysine 29 forms a Glycyl lysine isopeptide (Lys-Gly) (interchain with G-Cter in SUMO2) linkage. Residues serine 90 and serine 127 each carry the phosphoserine modification. Residues 148-162 are compositionally biased toward basic and acidic residues; the sequence is LETKEEHKMSPKATE. Over residues 166–189 the composition is skewed to polar residues; that stretch reads PVQSGQANCQGLSPVSVASKNPQV. A phosphoserine mark is found at serine 178 and serine 216. The C2H2-type 1; atypical zinc finger occupies 222-247; sequence FKCNICGYGYYGNDPTDLIKHFRKYH. A Glycyl lysine isopeptide (Lys-Gly) (interchain with G-Cter in SUMO2) cross-link involves residue lysine 263. The segment at 333 to 358 adopts a C2H2-type 2; atypical zinc-finger fold; it reads FRCKFCNFTYMGNSSTELEQHFLQTH. A disordered region spans residues 365 to 393; that stretch reads SLPSSEGVKPSEKNSNKSIPALRASDSGD. Glycyl lysine isopeptide (Lys-Gly) (interchain with G-Cter in SUMO2) cross-links involve residues lysine 418, lysine 457, lysine 474, and lysine 488. Positions 484–515 are disordered; sequence NDLAKSVEGEPLTKPEKGLSGAKKKDFPSKGA. Basic and acidic residues predominate over residues 488–515; the sequence is KSVEGEPLTKPEKGLSGAKKKDFPSKGA. A C2H2-type 3; atypical zinc finger spans residues 614 to 637; sequence HQCHQCSFSTPDVDVLLFHYETVH. The interval 635-819 is mediates interaction with GLI3; the sequence is TVHESQASDV…SLGLLTPVSS (185 aa). Lysine 645 is covalently cross-linked (Glycyl lysine isopeptide (Lys-Gly) (interchain with G-Cter in SUMO2)). C2H2-type zinc fingers lie at residues 666–689 and 692–715; these read HSCT…RRAH and YKCR…NTVH. Glycyl lysine isopeptide (Lys-Gly) (interchain with G-Cter in SUMO2) cross-links involve residues lysine 737 and lysine 755. A Glycyl lysine isopeptide (Lys-Gly) (interchain with G-Cter in SUMO1); alternate cross-link involves residue lysine 766. Lysine 766 participates in a covalent cross-link: Glycyl lysine isopeptide (Lys-Gly) (interchain with G-Cter in SUMO2); alternate. Residues lysine 825 and lysine 850 each participate in a glycyl lysine isopeptide (Lys-Gly) (interchain with G-Cter in SUMO2) cross-link. The tract at residues 856–885 is disordered; it reads APAGSEKSASLTQQYPASGESKTKDESQSL. Residues 862–871 show a composition bias toward polar residues; the sequence is KSASLTQQYP. Residues lysine 877 and lysine 879 each participate in a glycyl lysine isopeptide (Lys-Gly) (interchain with G-Cter in SUMO2) cross-link. The GATA-type zinc finger occupies 896–920; sequence CANCLTTKTSLWRKNANGGYVCNAC. Residues lysine 925, lysine 937, and lysine 965 each participate in a glycyl lysine isopeptide (Lys-Gly) (interchain with G-Cter in SUMO2) cross-link. A compositionally biased stretch (polar residues) spans 961-977; the sequence is EQLNKQQRGSGEEQVNG. The tract at residues 961–1000 is disordered; the sequence is EQLNKQQRGSGEEQVNGSPLERRSEDHLSESHPREIPLPS. Serine 978 is subject to Phosphoserine. Residues 980–995 are compositionally biased toward basic and acidic residues; it reads LERRSEDHLSESHPRE. Residues 985 to 1184 are mediates interaction with RNF4; it reads EDHLSESHPR…PTANGASKEK (200 aa). Residues lysine 1003, lysine 1012, lysine 1030, and lysine 1040 each participate in a glycyl lysine isopeptide (Lys-Gly) (interchain with G-Cter in SUMO2) cross-link. Over residues 1040–1049 the composition is skewed to polar residues; it reads KSPQESTGDP. The interval 1040-1078 is disordered; it reads KSPQESTGDPGNSSSVSDGKGSSERGSPIEKYMRPAKHP. Serine 1041 carries the post-translational modification Phosphoserine. A compositionally biased stretch (low complexity) spans 1050–1059; the sequence is GNSSSVSDGK. Residues 1060-1072 show a composition bias toward basic and acidic residues; it reads GSSERGSPIEKYM. Serine 1066 carries the phosphoserine modification. Lysine 1070 participates in a covalent cross-link: Glycyl lysine isopeptide (Lys-Gly) (interchain with G-Cter in SUMO2). At serine 1085 the chain carries Phosphoserine. The segment at 1163–1281 is transcriptional repressor domain; that stretch reads PLDLAIKHSR…QAEKNGKPKE (119 aa). Positions 1169-1195 are disordered; that stretch reads KHSRPGPTANGASKEKTKAPPTVKNED. Residues lysine 1192 and lysine 1201 each participate in a glycyl lysine isopeptide (Lys-Gly) (interchain with G-Cter in SUMO2); alternate cross-link. Residues lysine 1192 and lysine 1201 each participate in a glycyl lysine isopeptide (Lys-Gly) (interchain with G-Cter in SUMO); alternate cross-link. A Glycyl lysine isopeptide (Lys-Gly) (interchain with G-Cter in SUMO1); alternate cross-link involves residue lysine 1201. 2 C2H2-type zinc fingers span residues 1215-1237 and 1243-1267; these read TKCV…MSCH and FQCS…RGLH.

Interacts with RNF4; regulates TRPS1 repressor activity. Interacts specifically with the activator form of GLI3 (GLI3A) but not with the repressor form (GLI3R). In terms of processing, sumoylated. Sumoylation in the repressor domain inhibits the transcription repression activity. Sumoylation on Lys-1201 is the major site. Appears to be sumoylated on multiple sites. In terms of tissue distribution, in the embryo, expression is detected in both visceral and skeletal tissues. Found in the maxilla, mandible, snout, prospective phalanges and in the femoral head within the developing hip. Also expressed in the hair follicles.

It localises to the nucleus. Functionally, transcriptional repressor. Binds specifically to GATA sequences and represses expression of GATA-regulated genes at selected sites and stages in vertebrate development. Regulates chondrocyte proliferation and differentiation. Executes multiple functions in proliferating chondrocytes, expanding the region of distal chondrocytes, activating proliferation in columnar cells and supporting the differentiation of columnar into hypertrophic chondrocytes. This chain is Zinc finger transcription factor Trps1 (Trps1), found in Mus musculus (Mouse).